We begin with the raw amino-acid sequence, 556 residues long: Serine/threonine-protein kinase PksC (556 aa).

The region spanning 20–287 (YQLRDLLGEG…SAEAMRDECL (268 aa)) is the Protein kinase domain. ATP is bound by residues 26 to 34 (LGEGGMASV) and Lys49. The active-site Proton acceptor is Asp151. Disordered stretches follow at residues 300 to 403 (IVPG…PGGK) and 435 to 485 (EDPE…DPDK). Pro residues predominate over residues 336–348 (QPTPSPGPNPYGT). Composition is skewed to low complexity over residues 360-381 (YPQQAGYQTPAPAPYAQQQAAA) and 445-458 (STASVSASPSKAAG). The segment covering 461–475 (GPDKEKTIEKDKCTE) has biased composition (basic and acidic residues). One can recognise a PASTA domain in the interval 482–550 (DPDKIQVPDF…MPEIQLKVST (69 aa)).

Belongs to the protein kinase superfamily. Ser/Thr protein kinase family.

The catalysed reaction is L-seryl-[protein] + ATP = O-phospho-L-seryl-[protein] + ADP + H(+). It catalyses the reaction L-threonyl-[protein] + ATP = O-phospho-L-threonyl-[protein] + ADP + H(+). The chain is Serine/threonine-protein kinase PksC (pksC) from Streptomyces coelicolor (strain ATCC BAA-471 / A3(2) / M145).